The chain runs to 392 residues: Protein RecA (392 aa).

Residues 1 to 21 (MALETKPAQDPATEIKHELDP) form a disordered region. Position 83 to 90 (83 to 90 (GPESSGKT)) interacts with ATP. The disordered stretch occupies residues 372-392 (DAAKDTKATAAPAAKSSRAKA). The span at 379–392 (ATAAPAAKSSRAKA) shows a compositional bias: low complexity.

This sequence belongs to the RecA family.

It is found in the cytoplasm. Its function is as follows. Can catalyze the hydrolysis of ATP in the presence of single-stranded DNA, the ATP-dependent uptake of single-stranded DNA by duplex DNA, and the ATP-dependent hybridization of homologous single-stranded DNAs. It interacts with LexA causing its activation and leading to its autocatalytic cleavage. In Bifidobacterium breve, this protein is Protein RecA.